The sequence spans 326 residues: Protoheme IX farnesyltransferase (326 aa).

8 consecutive transmembrane segments (helical) span residues 35-55 (LIPLLLATTLGGMALTEGWPL), 60-80 (LICTLGGGALASAAAGVLNCL), 106-126 (TAFIGAIACTLVAAMLLVSGV), 129-149 (LAAGLSLLGLCSYVLLYTALL), 157-177 (IVVGGVAGAIPPLVGAAAATG), 185-205 (WLFALVMVWTPAHFWALALLL), 238-258 (VLLSGFGILALPTGGLFYGLM), and 289-309 (WSILYLFGICLLLILSRSALA).

Belongs to the UbiA prenyltransferase family. Protoheme IX farnesyltransferase subfamily.

It is found in the cell inner membrane. It catalyses the reaction heme b + (2E,6E)-farnesyl diphosphate + H2O = Fe(II)-heme o + diphosphate. It functions in the pathway porphyrin-containing compound metabolism; heme O biosynthesis; heme O from protoheme: step 1/1. Its function is as follows. Converts heme B (protoheme IX) to heme O by substitution of the vinyl group on carbon 2 of heme B porphyrin ring with a hydroxyethyl farnesyl side group. This Synechococcus sp. (strain CC9902) protein is Protoheme IX farnesyltransferase.